Reading from the N-terminus, the 213-residue chain is 2-dehydro-3-deoxy-phosphogluconate aldolase (213 aa).

The active-site Proton acceptor is the Glu45. Residues Arg49, Thr73, and Lys133 each coordinate pyruvate. Lys133 acts as the Schiff-base intermediate with substrate in catalysis.

The protein belongs to the KHG/KDPG aldolase family. As to quaternary structure, homotrimer.

It localises to the cytoplasm. The enzyme catalyses 2-dehydro-3-deoxy-6-phospho-D-gluconate = D-glyceraldehyde 3-phosphate + pyruvate. It functions in the pathway carbohydrate acid metabolism; 2-dehydro-3-deoxy-D-gluconate degradation; D-glyceraldehyde 3-phosphate and pyruvate from 2-dehydro-3-deoxy-D-gluconate: step 2/2. Involved in the degradation of glucose via the Entner-Doudoroff pathway. Catalyzes the reversible, stereospecific retro-aldol cleavage of 2-keto-3-deoxy-6-phosphogluconate (KDPG) to pyruvate and D-glyceraldehyde-3-phosphate. This chain is 2-dehydro-3-deoxy-phosphogluconate aldolase (eda), found in Dickeya dadantii (strain 3937) (Erwinia chrysanthemi (strain 3937)).